Reading from the N-terminus, the 485-residue chain is MELFELTIHELHDKLKKKEVSSVEATESMLARIEAVEPKVNAFITVTADQALKDAAEADKRIADGDMDKLTGIPVALKDIFLTKGVRTTCASRILENFIPPYDATSVARLKARGAVLVGKLNQDEFAMGSSTESSYFGKTSNPWNLECIPGGSSGGSAAAIAAQQATATLGTDTGGSIRQPASHCGCVGLKPTYGRVSRYGVIAYASSLDQVGPVTRDVTDCAIMLEAVAGYDAKDSTSVDLPVPEYTKALTGQVKGLKIGLPREYFIEGLDPDVQKAMDEAIATYRQMGAEFQEVSLPHTDYAVATYYLVATAEASSNLARYDGARFGHRSHEAQSLLDMYRKSRAEGFGEEVKRRIMLGTYALSSGYYDAYYLKAQKVRTLIMHDFIKAFEQVDVLLTPVAPTPAFRIGEKTSDPLQMYLSDIFTIPVNLAGTCGISVPAGLSRAGLPIGLQLIGKPFGEENILRAAHAFEQNTDWHKRRAAL.

Catalysis depends on charge relay system residues lysine 78 and serine 153. Residue serine 177 is the Acyl-ester intermediate of the active site.

The protein belongs to the amidase family. GatA subfamily. Heterotrimer of A, B and C subunits.

The enzyme catalyses L-glutamyl-tRNA(Gln) + L-glutamine + ATP + H2O = L-glutaminyl-tRNA(Gln) + L-glutamate + ADP + phosphate + H(+). Allows the formation of correctly charged Gln-tRNA(Gln) through the transamidation of misacylated Glu-tRNA(Gln) in organisms which lack glutaminyl-tRNA synthetase. The reaction takes place in the presence of glutamine and ATP through an activated gamma-phospho-Glu-tRNA(Gln). This Geotalea daltonii (strain DSM 22248 / JCM 15807 / FRC-32) (Geobacter daltonii) protein is Glutamyl-tRNA(Gln) amidotransferase subunit A.